The chain runs to 338 residues: 5-dehydro-2-deoxygluconokinase (338 aa).

The protein belongs to the carbohydrate kinase PfkB family.

The catalysed reaction is 5-dehydro-2-deoxy-D-gluconate + ATP = 6-phospho-5-dehydro-2-deoxy-D-gluconate + ADP + H(+). The protein operates within polyol metabolism; myo-inositol degradation into acetyl-CoA; acetyl-CoA from myo-inositol: step 5/7. Its function is as follows. Catalyzes the phosphorylation of 5-dehydro-2-deoxy-D-gluconate (2-deoxy-5-keto-D-gluconate or DKG) to 6-phospho-5-dehydro-2-deoxy-D-gluconate (DKGP). The sequence is that of 5-dehydro-2-deoxygluconokinase from Mesomycoplasma hyopneumoniae (strain 7448) (Mycoplasma hyopneumoniae).